A 325-amino-acid chain; its full sequence is Glutarate 2-hydroxylase (325 aa).

Histidine 160, aspartate 162, and histidine 292 together coordinate Fe cation.

It belongs to the glutarate hydroxylase family. In terms of assembly, homotetramer. It depends on Fe(2+) as a cofactor.

It carries out the reaction glutarate + 2-oxoglutarate + O2 = (S)-2-hydroxyglutarate + succinate + CO2. It functions in the pathway amino-acid degradation. Its function is as follows. Acts as an alpha-ketoglutarate-dependent dioxygenase catalyzing hydroxylation of glutarate (GA) to L-2-hydroxyglutarate (L2HG). Functions in a L-lysine degradation pathway that proceeds via cadaverine, glutarate and L-2-hydroxyglutarate. The protein is Glutarate 2-hydroxylase of Escherichia coli O7:K1 (strain IAI39 / ExPEC).